We begin with the raw amino-acid sequence, 397 residues long: Putative odorant receptor 83c (397 aa).

Topologically, residues 1-39 are cytoplasmic; that stretch reads MSTSESPSSRFRELSKYINSLTNLLGVDFLSPKLKFNYR. Residues 40–60 traverse the membrane as a helical segment; that stretch reads TWTTIFAIANYTGFTVFTILN. Over 61–70 the chain is Extracellular; the sequence is NGGDWRVGLK. A helical transmembrane segment spans residues 71–90; the sequence is ASLMTGGLFHGLGKFLTCLL. Over 91 to 136 the chain is Cytoplasmic; it reads KHQDMRRLVLYSQSIYDEYETRGDSYHRTLNSNIDRLLGIMKIIRN. Residues 137-157 form a helical membrane-spanning segment; sequence GYVFAFCLMELLPLAMLMYDG. Over 158-186 the chain is Extracellular; that stretch reads TRVTAMQYLIPGLPLENNYCYVVTYMIQT. The chain crosses the membrane as a helical span at residues 187-207; it reads VTMLVQGVGFYSGDLFVFLGL. The Cytoplasmic segment spans residues 208-282; sequence TQILTFADML…ALYYELIATQ (75 aa). A helical transmembrane segment spans residues 283–299; that stretch reads VLSMALAMMLSFCINLS. The Extracellular portion of the chain corresponds to 300–305; the sequence is SFHMPS. The chain crosses the membrane as a helical span at residues 306 to 326; that stretch reads AIFFVVSAYSMSIYCILGTIL. At 327 to 365 the chain is on the cytoplasmic side; it reads EFAYDQVYESICNVTWYELSGEQRKLFGFLLRESQYPHN. Residues 366-386 form a helical membrane-spanning segment; it reads IQILGVMSLSVRTALQIVKLI. Residues 387 to 397 lie on the Extracellular side of the membrane; the sequence is YSVSMMMMNRA.

The protein belongs to the insect chemoreceptor superfamily. Heteromeric odorant receptor channel (TC 1.A.69) family. Or67d subfamily. As to quaternary structure, interacts with Orco. Complexes exist early in the endomembrane system in olfactory sensory neurons (OSNs), coupling these complexes to the conserved ciliary trafficking pathway. In terms of tissue distribution, expressed in olfactory sensory neurons in the antenna.

Its subcellular location is the cell membrane. Functionally, odorant receptor which mediates acceptance or avoidance behavior, depending on its substrates. The odorant receptor repertoire encodes a large collection of odor stimuli that vary widely in identity, intensity, and duration. May form a complex with Orco to form odorant-sensing units, providing sensitive and prolonged odorant signaling and calcium permeability. The protein is Putative odorant receptor 83c (Or83c) of Drosophila melanogaster (Fruit fly).